The primary structure comprises 131 residues: Phosphoribosyl-AMP cyclohydrolase (131 aa).

Position 82 (D82) interacts with Mg(2+). Zn(2+) is bound at residue C83. 2 residues coordinate Mg(2+): D84 and D86. Residues C99 and C106 each coordinate Zn(2+).

This sequence belongs to the PRA-CH family. Homodimer. The cofactor is Mg(2+). Requires Zn(2+) as cofactor.

Its subcellular location is the cytoplasm. It carries out the reaction 1-(5-phospho-beta-D-ribosyl)-5'-AMP + H2O = 1-(5-phospho-beta-D-ribosyl)-5-[(5-phospho-beta-D-ribosylamino)methylideneamino]imidazole-4-carboxamide. Its pathway is amino-acid biosynthesis; L-histidine biosynthesis; L-histidine from 5-phospho-alpha-D-ribose 1-diphosphate: step 3/9. Its function is as follows. Catalyzes the hydrolysis of the adenine ring of phosphoribosyl-AMP. The polypeptide is Phosphoribosyl-AMP cyclohydrolase (Methanospirillum hungatei JF-1 (strain ATCC 27890 / DSM 864 / NBRC 100397 / JF-1)).